Consider the following 1435-residue polypeptide: DNA polymerase III PolC-type (1435 aa).

One can recognise an Exonuclease domain in the interval 420–576 (YVVFDVETTG…YDTEATAYIF (157 aa)).

The protein belongs to the DNA polymerase type-C family. PolC subfamily.

It localises to the cytoplasm. It carries out the reaction DNA(n) + a 2'-deoxyribonucleoside 5'-triphosphate = DNA(n+1) + diphosphate. Functionally, required for replicative DNA synthesis. This DNA polymerase also exhibits 3' to 5' exonuclease activity. This chain is DNA polymerase III PolC-type, found in Staphylococcus aureus.